Consider the following 129-residue polypeptide: Small ribosomal subunit protein uS11 (129 aa).

This sequence belongs to the universal ribosomal protein uS11 family. Part of the 30S ribosomal subunit. Interacts with proteins S7 and S18. Binds to IF-3.

Its function is as follows. Located on the platform of the 30S subunit, it bridges several disparate RNA helices of the 16S rRNA. Forms part of the Shine-Dalgarno cleft in the 70S ribosome. The sequence is that of Small ribosomal subunit protein uS11 from Pseudomonas fluorescens (strain ATCC BAA-477 / NRRL B-23932 / Pf-5).